A 291-amino-acid polypeptide reads, in one-letter code: Inhibitory synaptic factor 1 (291 aa).

The disordered stretch occupies residues 1–25; that stretch reads MNIRGAPDLGQPSDDPNSGGERERI. A coiled-coil region spans residues 30–63; that stretch reads KMVIGQLEGILRELKEVAKELREVVSQIDKLTSD. Disordered stretches follow at residues 120 to 186 and 201 to 291; these read TPSD…ERVR and EEGD…KGKN. Residues 201 to 213 show a composition bias toward acidic residues; the sequence is EEGDGEEVEEEEA. A compositionally biased stretch (polar residues) spans 262–284; the sequence is RNSSTQTVSDKSTQTVLPYTATK.

The protein belongs to the INSYN1 family. In terms of assembly, interacts with GPHN.

The protein localises to the postsynaptic density. Functionally, component of the protein machinery at the inhibitory synapses, probably acting as a scaffold. Inhibitory synapses dampen neuronal activity through postsynaptic hyperpolarization. This synaptic inhibition is fundamental for the functioning of the central nervous system, shaping and orchestrating the flow of information through neuronal networks to generate a precise neural code. This chain is Inhibitory synaptic factor 1 (Insyn1), found in Rattus norvegicus (Rat).